The following is a 209-amino-acid chain: FMN-dependent NADH:quinone oxidoreductase 2 (209 aa).

Residues S9, 15–17 (SVS), and 97–100 (MWNF) contribute to the FMN site.

The protein belongs to the azoreductase type 1 family. As to quaternary structure, homodimer. FMN is required as a cofactor.

The catalysed reaction is 2 a quinone + NADH + H(+) = 2 a 1,4-benzosemiquinone + NAD(+). It carries out the reaction N,N-dimethyl-1,4-phenylenediamine + anthranilate + 2 NAD(+) = 2-(4-dimethylaminophenyl)diazenylbenzoate + 2 NADH + 2 H(+). Its function is as follows. Quinone reductase that provides resistance to thiol-specific stress caused by electrophilic quinones. Functionally, also exhibits azoreductase activity. Catalyzes the reductive cleavage of the azo bond in aromatic azo compounds to the corresponding amines. The polypeptide is FMN-dependent NADH:quinone oxidoreductase 2 (Pseudomonas syringae pv. tomato (strain ATCC BAA-871 / DC3000)).